We begin with the raw amino-acid sequence, 37 residues long: Large ribosomal subunit protein bL36 (37 aa).

This sequence belongs to the bacterial ribosomal protein bL36 family.

This is Large ribosomal subunit protein bL36 from Staphylococcus aureus (strain Mu3 / ATCC 700698).